Consider the following 1048-residue polypeptide: Cysteine-rich motor neuron 1 protein (1048 aa).

The N-terminal stretch at 1–46 (MYLAAVSAGRRRPGGDGGGGGGGWHLAAAGWLLLLALLLGQPGTRA) is a signal peptide. The IGFBP N-terminal domain maps to 47-124 (LVCLPCDESK…EYEVGVCEDE (78 aa)). The Extracellular portion of the chain corresponds to 47 to 952 (LVCLPCDESK…HPSEDASVSS (906 aa)). 4 disulfide bridges follow: cysteine 49-cysteine 72, cysteine 52-cysteine 74, cysteine 57-cysteine 75, and cysteine 63-cysteine 78. Asparagine 83 is a glycosylation site (N-linked (GlcNAc...) asparagine). 2 disulfides stabilise this stretch: cysteine 86-cysteine 102 and cysteine 96-cysteine 121. The Cell attachment site motif lies at 326–328 (RGD). VWFC domains are found at residues 346 to 403 (PTCI…PVCE) and 413 to 469 (AGCY…PVCE). Antistasin-like domains follow at residues 481–510 (CELLVNCTLTEKDCIYSFKLDQNGCRICQC), 517–544 (CTGLISGCSLDCSFGFQTDAHNCEICQC), 551–576 (CKPIVCDKYCPFGYLKNKHGCEICRC), and 579–604 (CPEMPCGKICPMGFQQNSHGCVICKC). A glycan (N-linked (GlcNAc...) asparagine) is linked at asparagine 486. VWFC domains are found at residues 618–675 (GSCL…PSCP) and 689–747 (SICH…PQCP). An N-linked (GlcNAc...) asparagine glycan is attached at asparagine 758. VWFC domains lie at 763–821 (SYCK…PYCI) and 829–886 (VVCH…PMCP). Positions 904–906 (RGD) match the Cell attachment site motif. The N-linked (GlcNAc...) asparagine glycan is linked to asparagine 913. Residues 953-973 (VALVTVPITIALLVIIVFLLI) traverse the membrane as a helical segment. The Cytoplasmic portion of the chain corresponds to 974–1048 (NQKKQWIPVS…LQADNFYQTV (75 aa)).

Its subcellular location is the membrane. Functionally, may play a role in CNS development by interacting with growth factors implicated in motor neuron differentiation and survival. The chain is Cysteine-rich motor neuron 1 protein (CRIM1) from Gallus gallus (Chicken).